The following is a 433-amino-acid chain: MSTSAKHTSAPDSFFSASLEQADPEIAAAIKGELGRQRHEVELIASENIVSRAVLEAQGSVMTNKYAEGYPGARYYGGCEFVDVAENLAIERAKKLFGAGFANVQPNSGSQMNQAVFLALLQPGDTFMGLDLAAGGHLTHGATVNMSGKWFKPVHYTVRREDGIIDMDAVAKLAEETRPKLIIAGGSAYSRAWDFKRFREIADSVGAYFMVDMAHFAGLVAGGAHASPVPHAHVCTTTTHKSLRGPRGGLILTNDEALAKKFNSAIFPGLQGGPLMHVIAAKAVAFKEALQPDFKVYAKNVVENAKALAETLRAAGFDLVSGGTDNHLMLVDLRPKGLKGNVSEKALVRAAITCNKNGIPFDPEKPFVTSGLRLGTPAATTRGFGVAEFQQVGNLIAEVLNAIAQSPDGAAPLVEASVKQRVKELTDRFPIYQ.

(6S)-5,6,7,8-tetrahydrofolate is bound by residues Leu-132 and 136-138 (GHL). Lys-241 carries the post-translational modification N6-(pyridoxal phosphate)lysine.

The protein belongs to the SHMT family. In terms of assembly, homodimer. Pyridoxal 5'-phosphate serves as cofactor.

It is found in the cytoplasm. It carries out the reaction (6R)-5,10-methylene-5,6,7,8-tetrahydrofolate + glycine + H2O = (6S)-5,6,7,8-tetrahydrofolate + L-serine. It functions in the pathway one-carbon metabolism; tetrahydrofolate interconversion. Its pathway is amino-acid biosynthesis; glycine biosynthesis; glycine from L-serine: step 1/1. In terms of biological role, catalyzes the reversible interconversion of serine and glycine with tetrahydrofolate (THF) serving as the one-carbon carrier. This reaction serves as the major source of one-carbon groups required for the biosynthesis of purines, thymidylate, methionine, and other important biomolecules. Also exhibits THF-independent aldolase activity toward beta-hydroxyamino acids, producing glycine and aldehydes, via a retro-aldol mechanism. The chain is Serine hydroxymethyltransferase from Rhodopseudomonas palustris (strain HaA2).